A 281-amino-acid chain; its full sequence is 4-diphosphocytidyl-2-C-methyl-D-erythritol kinase (281 aa).

Lys-15 is an active-site residue. An ATP-binding site is contributed by 98–108; sequence PTGAGLGGGSS. Asp-140 is a catalytic residue.

Belongs to the GHMP kinase family. IspE subfamily.

The enzyme catalyses 4-CDP-2-C-methyl-D-erythritol + ATP = 4-CDP-2-C-methyl-D-erythritol 2-phosphate + ADP + H(+). The protein operates within isoprenoid biosynthesis; isopentenyl diphosphate biosynthesis via DXP pathway; isopentenyl diphosphate from 1-deoxy-D-xylulose 5-phosphate: step 3/6. Its function is as follows. Catalyzes the phosphorylation of the position 2 hydroxy group of 4-diphosphocytidyl-2C-methyl-D-erythritol. This Neisseria gonorrhoeae (strain NCCP11945) protein is 4-diphosphocytidyl-2-C-methyl-D-erythritol kinase.